Reading from the N-terminus, the 371-residue chain is Zinc finger CCCH domain-containing protein 21 (371 aa).

A disordered region spans residues 1–64 (MPPKQQPKAD…AAKKKKEEEK (64 aa)). Residues 10 to 23 (DLAKKQKQVEDKTF) show a composition bias toward basic and acidic residues. Polar residues predominate over residues 34–46 (VQKYVQSLKQSVQ). C3H1-type zinc fingers lie at residues 88–115 (DPKS…HDLN) and 159–197 (KPTD…HALP). 2 coiled-coil regions span residues 205-237 (QMKA…ATQM) and 283-317 (FVDD…GTSK). A disordered region spans residues 290-371 (CEEYEREREQ…IREPNDEGSS (82 aa)). The segment covering 292 to 312 (EYEREREQEETEQKAKNKEAE) has biased composition (basic and acidic residues). Acidic residues predominate over residues 330–352 (NEEEEDDDDDDDDLDMDELDELE).

The chain is Zinc finger CCCH domain-containing protein 21 from Arabidopsis thaliana (Mouse-ear cress).